The following is a 227-amino-acid chain: UPF0173 metal-dependent hydrolase STK_14180 (227 aa).

This sequence belongs to the UPF0173 family.

In Sulfurisphaera tokodaii (strain DSM 16993 / JCM 10545 / NBRC 100140 / 7) (Sulfolobus tokodaii), this protein is UPF0173 metal-dependent hydrolase STK_14180.